A 476-amino-acid polypeptide reads, in one-letter code: Protein transport protein Sec61 subunit alpha (476 aa).

Topologically, residues 2 to 33 (GIKFLEVIKPFCAVLPEIQKPERKIQFREKVL) are cytoplasmic. The chain crosses the membrane as a helical span at residues 34-53 (WTAITLFIFLVCCQIPLFGI). Topologically, residues 54–76 (MSSDSADPFYWMRVILASNRGTL) are lumenal. The chain crosses the membrane as a helical span at residues 77–96 (MELGISPIVTSGLIMQLLAG). Residues 97–117 (AKIIEVGDTPKDRALFNGAQK) lie on the Cytoplasmic side of the membrane. The helical transmembrane segment at 118-138 (LFGMIITIGQAIVYVMTGMYG) threads the bilayer. The Lumenal segment spans residues 139-144 (DPSEMG). The helical transmembrane segment at 145–165 (AGICLVIIIQLFVAGLIVLLL) threads the bilayer. The Cytoplasmic portion of the chain corresponds to 166–172 (DELLQKG). Residues 173–193 (YGLGSGISLFIATNICETIVW) form a helical membrane-spanning segment. Topologically, residues 194 to 240 (KAFSPTTVNTGRGTEFEGAIIALFHLLATRTDKVRALREAFYRQNLP) are lumenal. Residues 241-261 (NLMNLIATVFVFAVVIYFQGF) form a helical membrane-spanning segment. The Cytoplasmic segment spans residues 262-288 (RVDLPIKSARYRGQYNTYPIKLFYTSN). Residues 289–309 (IPIILQSALVSNLYVISQMLS) form a helical membrane-spanning segment. Residues 310–354 (TRFSGNFLVNLLGTWSDTSTGGPARAYPVGGLCYYFSPPESFGSV) are Lumenal-facing. The helical transmembrane segment at 355–375 (LDDPVHASIYIVFMLGSCAFF) threads the bilayer. Over 376-420 (SKTWIEVSGSSAKDVAKQLKEQQMVMRGHRETSMVHELNRYIPTA) the chain is Cytoplasmic. Residues 421–441 (AAFGGLCIGGLSVMADFLGAI) form a helical membrane-spanning segment. Residues 442–445 (GSGT) lie on the Lumenal side of the membrane. A helical membrane pass occupies residues 446 to 462 (GILLAVTIIYQYFEIFV). Residues 463–476 (KEQSEMGSMGALLF) are Cytoplasmic-facing.

The protein belongs to the SecY/SEC61-alpha family. In terms of assembly, the SEC61 channel-forming translocon complex consists of channel-forming core components SEC61A1, SEC61B and SEC61G and different auxiliary components such as SEC62 and SEC63. The SEC61 channel associates with the multi-pass translocon (MPT) complex.

The protein localises to the endoplasmic reticulum membrane. Its function is as follows. Component of SEC61 channel-forming translocon complex that mediates transport of signal peptide-containing precursor polypeptides across the endoplasmic reticulum (ER). Forms a ribosome receptor and a gated pore in the ER membrane, both functions required for cotranslational translocation of nascent polypeptides. May cooperate with auxiliary protein SEC62, SEC63 and HSPA5/BiP to enable post-translational transport of small presecretory proteins. The SEC61 channel is also involved in ER membrane insertion of transmembrane proteins: it mediates membrane insertion of the first few transmembrane segments of proteins, while insertion of subsequent transmembrane regions of multi-pass membrane proteins is mediated by the multi-pass translocon (MPT) complex. The protein is Protein transport protein Sec61 subunit alpha (sec61a) of Gadus ogac (Greenland cod).